Consider the following 327-residue polypeptide: Diacylglycerol acyltransferase/mycolyltransferase Ag85B (327 aa).

A signal peptide spans 1 to 38 (MIDVSGKIRAWGRWLLVGAAATLPSLISLAGGAATASA). Position 80–81 (80–81 (LR)) interacts with substrate. The tract at residues 96–106 (FEWYYQSGLSV) is fibronectin-binding. An intrachain disulfide couples Cys-125 to Cys-130. Substrate is bound by residues Ser-164 and Asp-192. The active-site Nucleophile is Ser-164. Glu-268 is a catalytic residue. Residues 270-273 (FVHG), Lys-277, and 300-302 (HSW) contribute to the substrate site. Residue His-300 is part of the active site.

It belongs to the mycobacterial A85 antigen family.

Its subcellular location is the secreted. The catalysed reaction is 2 alpha,alpha'-trehalose 6-mycolate = alpha,alpha'-trehalose 6,6'-bismycolate + alpha,alpha-trehalose. It carries out the reaction an acyl-CoA + a 1,2-diacyl-sn-glycerol = a triacyl-sn-glycerol + CoA. In terms of biological role, the antigen 85 proteins (FbpA, FbpB, FbpC) are responsible for the high affinity of mycobacteria for fibronectin, a large adhesive glycoprotein, which facilitates the attachment of M.tuberculosis to murine alveolar macrophages (AMs). They also help to maintain the integrity of the cell wall by catalyzing the transfer of mycolic acids to cell wall arabinogalactan and through the synthesis of alpha,alpha-trehalose dimycolate (TDM, cord factor). They catalyze the transfer of a mycoloyl residue from one molecule of alpha,alpha-trehalose monomycolate (TMM) to another TMM, leading to the formation of TDM. The sequence is that of Diacylglycerol acyltransferase/mycolyltransferase Ag85B (fbpB) from Mycobacterium leprae (strain TN).